A 204-amino-acid polypeptide reads, in one-letter code: Ribonuclease HII (204 aa).

Positions 1–197 (MTLGIDEAGR…KNRILNPKLL (197 aa)) constitute an RNase H type-2 domain. Residues Asp-6, Glu-7, and Asp-103 each coordinate a divalent metal cation.

The protein belongs to the RNase HII family. It depends on Mn(2+) as a cofactor. Mg(2+) is required as a cofactor.

The protein resides in the cytoplasm. The catalysed reaction is Endonucleolytic cleavage to 5'-phosphomonoester.. Functionally, endonuclease that specifically degrades the RNA of RNA-DNA hybrids. This Helicobacter pylori (strain HPAG1) protein is Ribonuclease HII.